The sequence spans 426 residues: MIDVKDLSENPDKFRASQRARGADESVVDAIISADSARRAALIRYENLRAEQNVFGKKVAQAKGEEKQALLAEVKELANSVKAASAEADAAQTKQEELLRTVPNLVEDGVPEGGEDDYVVVKTVGTPREFPDFEPKDHLEIGELIGAIDMERGAKVSGSRFYFLRGVGARLEMALLQMAMEQAIEAGFIPMITPTLVRPETMQGTGFDVKHDAEIYRLAEDDLYLVGTSEVALAGYHADEILDFSAGPIRYAGQSSCYRREAGSHGKDTRGIIRVHQFNKVEMFIYTTVEEAAAEHQRLLAWEEEMLAKCELPYRVIDTAAGDLGNSAARKYDCEAWVPTQGAYRELTSTSNCTTFQARRLNIRERAVNAEGVAKGTRAVATLNGTLATTRWIVALLEHHQNADGSVNVPKALQKYLGGLEVLPVL.

Residues 1–15 (MIDVKDLSENPDKFR) are compositionally biased toward basic and acidic residues. A disordered region spans residues 1–22 (MIDVKDLSENPDKFRASQRARG). 228-230 (TSE) contributes to the L-serine binding site. ATP contacts are provided by residues 259–261 (RRE) and Val-275. Glu-282 provides a ligand contact to L-serine. 346 to 349 (ELTS) provides a ligand contact to ATP. Thr-386 contributes to the L-serine binding site.

This sequence belongs to the class-II aminoacyl-tRNA synthetase family. Type-1 seryl-tRNA synthetase subfamily. As to quaternary structure, homodimer. The tRNA molecule binds across the dimer.

The protein resides in the cytoplasm. The catalysed reaction is tRNA(Ser) + L-serine + ATP = L-seryl-tRNA(Ser) + AMP + diphosphate + H(+). It carries out the reaction tRNA(Sec) + L-serine + ATP = L-seryl-tRNA(Sec) + AMP + diphosphate + H(+). It participates in aminoacyl-tRNA biosynthesis; selenocysteinyl-tRNA(Sec) biosynthesis; L-seryl-tRNA(Sec) from L-serine and tRNA(Sec): step 1/1. Its function is as follows. Catalyzes the attachment of serine to tRNA(Ser). Is also able to aminoacylate tRNA(Sec) with serine, to form the misacylated tRNA L-seryl-tRNA(Sec), which will be further converted into selenocysteinyl-tRNA(Sec). The protein is Serine--tRNA ligase of Pseudarthrobacter chlorophenolicus (strain ATCC 700700 / DSM 12829 / CIP 107037 / JCM 12360 / KCTC 9906 / NCIMB 13794 / A6) (Arthrobacter chlorophenolicus).